The sequence spans 274 residues: Large ribosomal subunit protein uL2 (274 aa).

Positions Val223–Lys274 are disordered. The segment covering Asp229–Val246 has biased composition (basic and acidic residues).

The protein belongs to the universal ribosomal protein uL2 family. As to quaternary structure, part of the 50S ribosomal subunit. Forms a bridge to the 30S subunit in the 70S ribosome.

Its function is as follows. One of the primary rRNA binding proteins. Required for association of the 30S and 50S subunits to form the 70S ribosome, for tRNA binding and peptide bond formation. It has been suggested to have peptidyltransferase activity; this is somewhat controversial. Makes several contacts with the 16S rRNA in the 70S ribosome. The protein is Large ribosomal subunit protein uL2 of Verminephrobacter eiseniae (strain EF01-2).